A 127-amino-acid polypeptide reads, in one-letter code: Gonadotropin subunit beta-1 (127 aa).

An N-terminal signal peptide occupies residues 1-22 (MHLAVTALCLTLAPVLARASTS). Cystine bridges form between Cys23/Cys71, Cys37/Cys86, Cys40/Cys124, Cys48/Cys102, Cys52/Cys104, and Cys107/Cys114. Residues Asn27 and Asn44 are each glycosylated (N-linked (GlcNAc...) asparagine).

Belongs to the glycoprotein hormones subunit beta family. As to quaternary structure, heterodimer of an alpha and a beta chain.

The protein localises to the secreted. Functionally, involved in gametogenesis and steroidogenesis. The polypeptide is Gonadotropin subunit beta-1 (cgba) (Anguilla japonica (Japanese eel)).